The primary structure comprises 152 residues: Methylglyoxal synthase (152 aa).

The region spanning 1–152 (MELTTRTIAA…YDRYLQQRLK (152 aa)) is the MGS-like domain. Substrate is bound by residues H19, K23, 45–48 (TGTT), and 65–66 (SG). The Proton donor/acceptor role is filled by D71. H98 serves as a coordination point for substrate.

The protein belongs to the methylglyoxal synthase family.

It carries out the reaction dihydroxyacetone phosphate = methylglyoxal + phosphate. Catalyzes the formation of methylglyoxal from dihydroxyacetone phosphate. The sequence is that of Methylglyoxal synthase from Yersinia enterocolitica serotype O:8 / biotype 1B (strain NCTC 13174 / 8081).